We begin with the raw amino-acid sequence, 103 residues long: Vesicle-associated membrane protein 3 (103 aa).

The disordered stretch occupies residues 1–25; sequence MSTGVPSGSSAATGSNRRLQQTQNQ. The Cytoplasmic portion of the chain corresponds to 1 to 81; that stretch reads MSTGVPSGSS…KRKYWWKNCK (81 aa). The v-SNARE coiled-coil homology domain occupies 18–78; that stretch reads RLQQTQNQVD…AKLKRKYWWK (61 aa). Residues K70, K72, and K81 each participate in a glycyl lysine isopeptide (Lys-Gly) (interchain with G-Cter in ubiquitin) cross-link. The helical; Anchor for type IV membrane protein transmembrane segment at 82–102 threads the bilayer; it reads MWAIGISVLVIIVIIIIVWCV. Residue S103 is a topological domain, vesicular.

This sequence belongs to the synaptobrevin family. In terms of assembly, interacts with POPDC1 (via the C-terminus cytoplasmic tail). Interacts with BCAP31; involved in VAMP3 export from the endoplasmic reticulum. Interacts with BAIAP3; this interaction is increased in the presence of calcium. Interacts with PICALM. Post-translationally, ubiquitinated by RNF167 at Lys-70, Lys-72 and Lys-81, regulating the recycling endosome pathway. In terms of processing, (Microbial infection) Targeted and hydrolyzed by C.botulinum neurotoxin type D (BoNT/D, botD) which hydrolyzes the 46-Lys-|-Leu-47 bond and probably inhibits neurotransmitter release. (Microbial infection) Targeted and hydrolyzed by C.botulinum neurotoxin type F (BoNT/F, botF) which hydrolyzes the 45-Gln-|-Lys-46 bond and probably inhibits neurotransmitter release. Post-translationally, (Microbial infection) Targeted and hydrolyzed by C.tetani toxin (tetX) which hydrolyzes the 63-Gln-|-Phe-64 bond and probably inhibits neurotransmitter release. In terms of tissue distribution, ubiquitous.

Its subcellular location is the early endosome membrane. It is found in the recycling endosome membrane. It localises to the synapse. The protein localises to the synaptosome. In terms of biological role, SNARE involved in vesicular transport from the late endosomes to the trans-Golgi network. The polypeptide is Vesicle-associated membrane protein 3 (Vamp3) (Rattus norvegicus (Rat)).